The sequence spans 213 residues: CASP-like protein 2A1 (213 aa).

Topologically, residues Met1–Pro41 are cytoplasmic. The chain crosses the membrane as a helical span at residues Val42 to Leu62. Residues Arg63–Tyr83 are Extracellular-facing. The chain crosses the membrane as a helical span at residues Leu84–Val104. At Pro105–Ser113 the chain is on the cytoplasmic side. The helical transmembrane segment at Trp114–Ala134 threads the bilayer. The Extracellular portion of the chain corresponds to Ala135 to Thr166. The chain crosses the membrane as a helical span at residues Ser167–Tyr187. Residues Arg188–Arg213 are Cytoplasmic-facing.

This sequence belongs to the Casparian strip membrane proteins (CASP) family. Homodimer and heterodimers.

The protein localises to the cell membrane. In Zea mays (Maize), this protein is CASP-like protein 2A1.